We begin with the raw amino-acid sequence, 155 residues long: Prespore-specific protein E (155 aa).

The N-terminal stretch at 1-20 is a signal peptide; it reads MRFISIFLIIVALCVSSSWA. 4 N-linked (GlcNAc...) asparagine glycosylation sites follow: Asn-22, Asn-82, Asn-85, and Asn-102. Ser-105 is a glycosylation site (O-linked (GlcNAc) serine). A lipid anchor (GPI-like-anchor amidated asparagine) is attached at Asn-133. The propeptide at 134–155 is removed in mature form; the sequence is SADKVAVGIAIIFGALISLLAL.

Post-translationally, the GPI-like-anchor contains a phosphoceramide group, rather than a phosphatidyl group.

It localises to the cell membrane. The polypeptide is Prespore-specific protein E (pspE) (Dictyostelium discoideum (Social amoeba)).